The chain runs to 379 residues: ORC1-type DNA replication protein 2 (379 aa).

ATP is bound by residues 69–73 (TGKTT), Tyr211, and Arg223.

Belongs to the CDC6/cdc18 family. In terms of assembly, interacts with MCM. In terms of processing, autophosphorylated on a serine. Phosphorylation is inhibited by binding to MCM. Both single-stranded DNA and double-stranded DNA inhibit the phosphorylation reaction.

Functionally, involved in regulation of DNA replication. Dissociates the MCM complex and inhibits the MCM helicase activity, suggesting that it may function as a helicase loader. Binds to both specific and random double-stranded or single-stranded DNA. The sequence is that of ORC1-type DNA replication protein 2 (cdc6-2) from Methanothermobacter thermautotrophicus (strain ATCC 29096 / DSM 1053 / JCM 10044 / NBRC 100330 / Delta H) (Methanobacterium thermoautotrophicum).